Reading from the N-terminus, the 217-residue chain is MTTKKRPVGKKKFVSFSDDDALSRTGRLPKNLPQHGSPPVYVRRTWQTIPFHLIVLSYWFIKHSNGYDVRKCTWLLVPCQVLYLALQFNPATVYGNKILKLNYALLAVSGVTCILLTIPCMLLVVLFGAPFLEMLDKTWLLSLHCCVLSYPAVYSVLNSDFKVGFFKKYFISIAVGCWISCLAIPLDWDRPWQEWPIPLVVGAQLGAMFGYTFCSQL.

6 helical membrane passes run threonine 45–isoleucine 61, tryptophan 74–tyrosine 94, valine 111–phenylalanine 131, threonine 138–asparagine 158, tyrosine 169–aspartate 189, and tryptophan 195–serine 215.

The protein belongs to the PIGF family.

It is found in the endoplasmic reticulum membrane. Its pathway is glycolipid biosynthesis; glycosylphosphatidylinositol-anchor biosynthesis. In terms of biological role, acts in the GPI biosynthetic pathway between GlcNAc-PI synthesis and GPI transfer to protein. In Eremothecium gossypii (strain ATCC 10895 / CBS 109.51 / FGSC 9923 / NRRL Y-1056) (Yeast), this protein is Glycosylphosphatidylinositol anchor biosynthesis protein 11 (GPI11).